The following is a 410-amino-acid chain: Interstrand DNA cross-link repair glycosylase (410 aa).

Residues 45–47 (QID) carry the QXD; important for activity motif.

The protein belongs to the DNA glycosylase AlkZ-like family.

In terms of biological role, DNA glycosylase involved in the repair of interstrand DNA cross-links (ICLs), which are highly toxic DNA lesions that covalently tether the opposing strands of DNA, thereby inhibiting essential cellular processes such as DNA replication and transcription. Acts by unhooking both sides of the ICLs, forming abasic (AP) sites on both strands. Unhooks ICLs derived from various cross-linking agents, including azinomycin B (AZB) and mechlorethamine, also known as nitrogen mustard (NM), protecting cells from the toxicity of these cross-linking agents. In vitro, also acts on monoadducts and can catalyze the excision of N7-methylguanine (7mGua) from an oligonucleotide containing N7-methyldeoxyguanosine (d7mG). Shows no unhooking activity toward FaPy-ICLs. This is Interstrand DNA cross-link repair glycosylase (ycaQ) from Escherichia coli (strain K12).